Reading from the N-terminus, the 505-residue chain is Histidine ammonia-lyase (505 aa).

Residues 141–143 (ASG) constitute a cross-link (5-imidazolinone (Ala-Gly)). The residue at position 142 (S142) is a 2,3-didehydroalanine (Ser).

Belongs to the PAL/histidase family. In terms of processing, contains an active site 4-methylidene-imidazol-5-one (MIO), which is formed autocatalytically by cyclization and dehydration of residues Ala-Ser-Gly.

The protein localises to the cytoplasm. It catalyses the reaction L-histidine = trans-urocanate + NH4(+). It participates in amino-acid degradation; L-histidine degradation into L-glutamate; N-formimidoyl-L-glutamate from L-histidine: step 1/3. The polypeptide is Histidine ammonia-lyase (Bacillus cereus (strain 03BB102)).